The sequence spans 365 residues: Succinyl-diaminopimelate desuccinylase (365 aa).

His65 provides a ligand contact to Zn(2+). Asp67 is an active-site residue. Residue Asp96 coordinates Zn(2+). The active-site Proton acceptor is the Glu126. Zn(2+)-binding residues include Glu127, Glu155, and His340.

The protein belongs to the peptidase M20A family. DapE subfamily. Homodimer. Zn(2+) is required as a cofactor. The cofactor is Co(2+).

It catalyses the reaction N-succinyl-(2S,6S)-2,6-diaminopimelate + H2O = (2S,6S)-2,6-diaminopimelate + succinate. The protein operates within amino-acid biosynthesis; L-lysine biosynthesis via DAP pathway; LL-2,6-diaminopimelate from (S)-tetrahydrodipicolinate (succinylase route): step 3/3. In terms of biological role, catalyzes the hydrolysis of N-succinyl-L,L-diaminopimelic acid (SDAP), forming succinate and LL-2,6-diaminopimelate (DAP), an intermediate involved in the bacterial biosynthesis of lysine and meso-diaminopimelic acid, an essential component of bacterial cell walls. The sequence is that of Succinyl-diaminopimelate desuccinylase from Campylobacter jejuni subsp. jejuni serotype O:2 (strain ATCC 700819 / NCTC 11168).